A 254-amino-acid polypeptide reads, in one-letter code: Undecaprenyl-diphosphatase 3 (254 aa).

A run of 8 helical transmembrane segments spans residues 8–28, 33–53, 74–94, 97–117, 133–153, 174–194, 207–227, and 233–253; these read TEFLPVSSTGHMILTGHLIGF, AKVFEVVIQLGSILAVVVIFW, LHIIIGMIPAGVLGVLFHSAI, VLFGPGPVVISLVAGGILMIV, ITYKQAFTIGMFQCLALWPGF, AEYTFILAVPMMVAASGLDLI, LFATGFITAFVVAMLAIVSFL, and VKLTPFAYYRFILAAVFYFFI.

Belongs to the UppP family.

Its subcellular location is the cell membrane. It catalyses the reaction di-trans,octa-cis-undecaprenyl diphosphate + H2O = di-trans,octa-cis-undecaprenyl phosphate + phosphate + H(+). Catalyzes the dephosphorylation of undecaprenyl diphosphate (UPP). Confers resistance to bacitracin. In Bacillus thuringiensis (strain Al Hakam), this protein is Undecaprenyl-diphosphatase 3.